A 200-amino-acid polypeptide reads, in one-letter code: Molybdenum cofactor guanylyltransferase (200 aa).

GTP-binding positions include 10-12 (LAG), Lys-23, Asn-51, Asp-69, and Asp-99. Asp-99 provides a ligand contact to Mg(2+).

It belongs to the MobA family. As to quaternary structure, monomer. Mg(2+) serves as cofactor.

The protein localises to the cytoplasm. It catalyses the reaction Mo-molybdopterin + GTP + H(+) = Mo-molybdopterin guanine dinucleotide + diphosphate. Transfers a GMP moiety from GTP to Mo-molybdopterin (Mo-MPT) cofactor (Moco or molybdenum cofactor) to form Mo-molybdopterin guanine dinucleotide (Mo-MGD) cofactor. The sequence is that of Molybdenum cofactor guanylyltransferase from Shewanella pealeana (strain ATCC 700345 / ANG-SQ1).